We begin with the raw amino-acid sequence, 615 residues long: 1-deoxy-D-xylulose-5-phosphate synthase (615 aa).

Thiamine diphosphate-binding positions include H72 and 111–113 (GHS). Mg(2+) is bound at residue D142. Residues 143-144 (GA), N171, Y278, and E360 each bind thiamine diphosphate. Residue N171 coordinates Mg(2+).

This sequence belongs to the transketolase family. DXPS subfamily. As to quaternary structure, homodimer. The cofactor is Mg(2+). Thiamine diphosphate is required as a cofactor.

The enzyme catalyses D-glyceraldehyde 3-phosphate + pyruvate + H(+) = 1-deoxy-D-xylulose 5-phosphate + CO2. It participates in metabolic intermediate biosynthesis; 1-deoxy-D-xylulose 5-phosphate biosynthesis; 1-deoxy-D-xylulose 5-phosphate from D-glyceraldehyde 3-phosphate and pyruvate: step 1/1. Functionally, catalyzes the acyloin condensation reaction between C atoms 2 and 3 of pyruvate and glyceraldehyde 3-phosphate to yield 1-deoxy-D-xylulose-5-phosphate (DXP). In Campylobacter jejuni subsp. jejuni serotype O:6 (strain 81116 / NCTC 11828), this protein is 1-deoxy-D-xylulose-5-phosphate synthase.